Here is a 229-residue protein sequence, read N- to C-terminus: Ribose-5-phosphate isomerase A (229 aa).

Substrate is bound by residues 28–31 (TGST), 84–87 (DGAD), and 97–100 (KGGG). Residue glutamate 106 is the Proton acceptor of the active site. Lysine 124 serves as a coordination point for substrate.

This sequence belongs to the ribose 5-phosphate isomerase family. Homodimer.

The catalysed reaction is aldehydo-D-ribose 5-phosphate = D-ribulose 5-phosphate. It functions in the pathway carbohydrate degradation; pentose phosphate pathway; D-ribose 5-phosphate from D-ribulose 5-phosphate (non-oxidative stage): step 1/1. Its function is as follows. Catalyzes the reversible conversion of ribose-5-phosphate to ribulose 5-phosphate. The sequence is that of Ribose-5-phosphate isomerase A from Lacticaseibacillus paracasei (strain ATCC 334 / BCRC 17002 / CCUG 31169 / CIP 107868 / KCTC 3260 / NRRL B-441) (Lactobacillus paracasei).